The sequence spans 233 residues: H-2 class II histocompatibility antigen, A-R alpha chain (233 aa).

Residues 1-88 (EDDIEADHVG…KRSNFTPAAN (88 aa)) form an alpha-1 region. Residues 1–195 (EDDIEADHVG…IPAPMSELTE (195 aa)) lie on the Extracellular side of the membrane. Residues 89 to 182 (EAPQATVFPK…GLEEPVLKHW (94 aa)) form an alpha-2 region. The 93-residue stretch at 91–183 (PQATVFPKSP…LEEPVLKHWE (93 aa)) folds into the Ig-like C1-type domain. Residues Cys-111 and Cys-167 are joined by a disulfide bond. The N-linked (GlcNAc...) asparagine glycan is linked to Asn-122. The interval 183–195 (EPEIPAPMSELTE) is connecting peptide. The chain crosses the membrane as a helical span at residues 196-221 (TVVCALGLSVGLVGIVVGTIFIIQGL). The Cytoplasmic segment spans residues 222–233 (RSGGTSRHPGPL).

This sequence belongs to the MHC class II family.

The protein resides in the membrane. This chain is H-2 class II histocompatibility antigen, A-R alpha chain (H2-Aa), found in Mus musculus (Mouse).